The primary structure comprises 239 residues: Pyridoxine 5'-phosphate synthase (239 aa).

A 3-amino-2-oxopropyl phosphate-binding site is contributed by N7. 9–10 (DH) contributes to the 1-deoxy-D-xylulose 5-phosphate binding site. R18 serves as a coordination point for 3-amino-2-oxopropyl phosphate. The Proton acceptor role is filled by H43. R45 and H50 together coordinate 1-deoxy-D-xylulose 5-phosphate. E70 functions as the Proton acceptor in the catalytic mechanism. T100 provides a ligand contact to 1-deoxy-D-xylulose 5-phosphate. The Proton donor role is filled by H191. 3-amino-2-oxopropyl phosphate contacts are provided by residues G192 and 213-214 (GH).

The protein belongs to the PNP synthase family. In terms of assembly, homooctamer; tetramer of dimers.

Its subcellular location is the cytoplasm. It catalyses the reaction 3-amino-2-oxopropyl phosphate + 1-deoxy-D-xylulose 5-phosphate = pyridoxine 5'-phosphate + phosphate + 2 H2O + H(+). It participates in cofactor biosynthesis; pyridoxine 5'-phosphate biosynthesis; pyridoxine 5'-phosphate from D-erythrose 4-phosphate: step 5/5. Its function is as follows. Catalyzes the complicated ring closure reaction between the two acyclic compounds 1-deoxy-D-xylulose-5-phosphate (DXP) and 3-amino-2-oxopropyl phosphate (1-amino-acetone-3-phosphate or AAP) to form pyridoxine 5'-phosphate (PNP) and inorganic phosphate. The chain is Pyridoxine 5'-phosphate synthase from Geotalea uraniireducens (strain Rf4) (Geobacter uraniireducens).